A 309-amino-acid chain; its full sequence is Taste receptor type 2 member 31 (309 aa).

Residues 1–2 (MI) lie on the Extracellular side of the membrane. Residues 3-23 (TFLPIIFSILVVVTFVIGNFA) traverse the membrane as a helical segment. Topologically, residues 24 to 55 (NGFIALVNSTEWVKRQKISFADQILTALAVSR) are cytoplasmic. Residues 56–76 (VGLLWVLLLNWYATVLNPAFY) traverse the membrane as a helical segment. Over 77-100 (SVEVRTTTYNVWAVTNHFSNWLAT) the chain is Extracellular. A helical transmembrane segment spans residues 101–121 (SLSIFYLLKIANFSNLIFLHL). The Cytoplasmic segment spans residues 122–126 (KRRVK). A helical membrane pass occupies residues 127 to 147 (NVILVMLLGPLLILACHLFMV). At 148–181 (NMNEIVRTKEYEENMTWKYILRNAIYHPGMTVTT) the chain is on the extracellular side. Asparagine 161 carries N-linked (GlcNAc...) asparagine glycosylation. The chain crosses the membrane as a helical span at residues 182–202 (LQNLVPFTLTLISFLLLICSL). At 203-229 (CKHLKKMQLHGKGPQDPSTKVHIKALQ) the chain is on the cytoplasmic side. Residues 230–250 (IVISFLLLCVIYFVSVIISIW) traverse the membrane as a helical segment. Residues 251-259 (SFESLGNKP) are Extracellular-facing. Residues 260 to 280 (VFMFCQAIRFSYPSAHPFIVI) form a helical membrane-spanning segment. Residues 281–309 (WGNKKLKQTFLSVLWNVRYWVKGQKPSSL) are Cytoplasmic-facing.

This sequence belongs to the G-protein coupled receptor T2R family.

The protein resides in the membrane. Receptor that may play a role in the perception of bitterness and is gustducin-linked. May play a role in sensing the chemical composition of the gastrointestinal content. The activity of this receptor may stimulate alpha gustducin, mediate PLC-beta-2 activation and lead to the gating of TRPM5. This is Taste receptor type 2 member 31 (TAS2R31) from Papio hamadryas (Hamadryas baboon).